A 180-amino-acid polypeptide reads, in one-letter code: Sec-independent protein translocase protein TatB (180 aa).

A helical transmembrane segment spans residues 1–21; the sequence is MFDIGWSELLVIGVVALIAIG. A disordered region spans residues 77 to 180; it reads TRGDLMTRLT…DQTARGAKAS (104 aa). Over residues 105-129 the composition is skewed to low complexity; sequence ADKPSVSSDAASASGSAAPEAGAAE.

This sequence belongs to the TatB family. As to quaternary structure, the Tat system comprises two distinct complexes: a TatABC complex, containing multiple copies of TatA, TatB and TatC subunits, and a separate TatA complex, containing only TatA subunits. Substrates initially bind to the TatABC complex, which probably triggers association of the separate TatA complex to form the active translocon.

It is found in the cell inner membrane. Its function is as follows. Part of the twin-arginine translocation (Tat) system that transports large folded proteins containing a characteristic twin-arginine motif in their signal peptide across membranes. Together with TatC, TatB is part of a receptor directly interacting with Tat signal peptides. TatB may form an oligomeric binding site that transiently accommodates folded Tat precursor proteins before their translocation. The sequence is that of Sec-independent protein translocase protein TatB from Nitrobacter winogradskyi (strain ATCC 25391 / DSM 10237 / CIP 104748 / NCIMB 11846 / Nb-255).